A 574-amino-acid polypeptide reads, in one-letter code: MSSGIILLIVAIVLLVIIAYLVGVIIRKRNDSLITSLEERKQALFALPVNDEIEEVKSLHLIGQSQTSFREWNQKWVDLTVNSFADIENHIFEAENLNDTFNFIRAKHEINSVESQLNLVEEDIASIREALNILKEQEEKNSARVTHALDLYEKLQASISENEDNFGSTMPEIDKQMKNIETEFSQFVALNSSGDPVEASEVLDRAEEHTIALGQITEQIPAIVAKLEDDFPDQLDDLETGYRRLLEENYHFPEKNIEARFQEIRESIRANSSELVTLDLDRAREENTHIQERIDSLYEVFEREIAAYKVAAKNSKMLPRYLAHVKHNNEQLKDEIARLSRKYILSETESLTVKAFEKDIKEIEDSTLAVAEQFGLQEKPFSELQVTFERSIKTLTNVESGQMDVFAAVKDIEKIESQARHNLDVYVTQLHMIKRYMEKRHLPGIPQDFLSAFFTTSSQLEALMDELSRGRINIEAVSRLSEVATVAIANLEDLTYQVVQNATLTEQLLQYSNRYRSFEAGVQSSFEHALRLFEVENDYQASFDEISYALETVEPGVTDRFVNSYEKTREHIRF.

The Extracellular segment spans residues 1–7 (MSSGIIL). The chain crosses the membrane as a helical span at residues 8–26 (LIVAIVLLVIIAYLVGVII). Residues 27 to 574 (RKRNDSLITS…YEKTREHIRF (548 aa)) lie on the Cytoplasmic side of the membrane. Coiled coils occupy residues 102–141 (NFIR…EEKN), 274–350 (ELVT…ETES), and 459–520 (QLEA…SFEA).

Belongs to the EzrA family.

The protein resides in the cell membrane. Negative regulator of FtsZ ring formation; modulates the frequency and position of FtsZ ring formation. Inhibits FtsZ ring formation at polar sites. Interacts either with FtsZ or with one of its binding partners to promote depolymerization. In Streptococcus pyogenes serotype M4 (strain MGAS10750), this protein is Septation ring formation regulator EzrA.